We begin with the raw amino-acid sequence, 179 residues long: Putative invertase inhibitor (179 aa).

The signal sequence occupies residues 1–23 (MKLSFSLCIFFFNLLLLLQAVIS). 2 cysteine pairs are disulfide-bonded: cysteine 31-cysteine 46 and cysteine 102-cysteine 142.

The protein belongs to the PMEI family. In terms of assembly, monomer. Post-translationally, not glycosylated. Expressed in pollen (at protein level). Expressed in stem, but not leaves (at protein level). Expressed in pollen.

It is found in the secreted. It localises to the cell wall. Its subcellular location is the endoplasmic reticulum. In terms of biological role, invertase inhibitor. This chain is Putative invertase inhibitor, found in Platanus acerifolia (London plane tree).